We begin with the raw amino-acid sequence, 538 residues long: Dihomomethionine N-hydroxylase (538 aa).

A helical membrane pass occupies residues 8 to 28 (LPYPFHILLVFILSMASITLL).

Belongs to the cytochrome P450 family. The cofactor is heme. In terms of tissue distribution, highly expressed in cotyledons, leaves, stems and siliques. Detected in flowers and lateral roots, but not in the main root. Expressed only in the vascular bundles in apical plant parts.

Its subcellular location is the endoplasmic reticulum membrane. It carries out the reaction an L-polyhomomethionine + 2 reduced [NADPH--hemoprotein reductase] + 2 O2 = an (E)-omega-(methylsulfanyl)-alkanal oxime + 2 oxidized [NADPH--hemoprotein reductase] + CO2 + 3 H2O + 2 H(+). The catalysed reaction is L-dihomomethionine + 2 reduced [NADPH--hemoprotein reductase] + 2 O2 = (E)-5-(methylsulfanyl)pentanal oxime + 2 oxidized [NADPH--hemoprotein reductase] + CO2 + 3 H2O + 2 H(+). The enzyme catalyses L-trihomomethionine + 2 reduced [NADPH--hemoprotein reductase] + 2 O2 = (E)-6-(methylsulfanyl)hexanal oxime + 2 oxidized [NADPH--hemoprotein reductase] + CO2 + 3 H2O + 2 H(+). In terms of biological role, catalyzes the conversion of the short chain elongated methionines di-, tri-, and tetrahomomethionine to their respective aldoximes 5-methylthiopentanaldoxime, 6-methylthiohexanaldoxime, and 7-methylheptanaldoxime. In Arabidopsis thaliana (Mouse-ear cress), this protein is Dihomomethionine N-hydroxylase (CYP79F1).